The sequence spans 390 residues: Galactokinase (390 aa).

35 to 38 (EHTD) lines the substrate pocket. 125-131 (GAGLSSS) provides a ligand contact to ATP. Positions 131 and 163 each coordinate Mg(2+). Aspartate 175 serves as the catalytic Proton acceptor. Tyrosine 224 provides a ligand contact to substrate.

Belongs to the GHMP kinase family. GalK subfamily.

Its subcellular location is the cytoplasm. It catalyses the reaction alpha-D-galactose + ATP = alpha-D-galactose 1-phosphate + ADP + H(+). It participates in carbohydrate metabolism; galactose metabolism. Its function is as follows. Catalyzes the transfer of the gamma-phosphate of ATP to D-galactose to form alpha-D-galactose-1-phosphate (Gal-1-P). In Proteus mirabilis (strain HI4320), this protein is Galactokinase.